The following is a 728-amino-acid chain: Ferric reduction oxidase 8, mitochondrial (728 aa).

The transit peptide at 1–24 directs the protein to the mitochondrion; the sequence is MAKVLTLLVLRLLMNLLLIGWISL. Transmembrane regions (helical) follow at residues 56-74, 104-127, 194-217, 269-293, and 316-336; these read FAVFSFPPIALSIVGLIYL, IGIVSCFEILALLLFLLFLAWNFY, YHVWFGTGLIFFSLVHGGSTLFIW, THHLYIVFLVAFLFHAGDRHFYWVL, and ILSANLFSCKAIELVLPKDPM. One can recognise a Ferric oxidoreductase domain in the interval 159-281; that stretch reads FGLLAEACLS…LYIVFLVAFL (123 aa). Residues His-195, His-209, His-270, and His-283 each coordinate heme. The 119-residue stretch at 300–418 folds into the FAD-binding FR-type domain; that stretch reads GLDKILRIVQ…EGPYGPASVD (119 aa). 358 to 361 contacts FAD; sequence HPFS. 410 to 413 is a binding site for NAD(+); it reads GPYG. Helical transmembrane passes span 537 to 559 and 595 to 616; these read FRWLATLVLITVLTFLGFLIGLS and DLIIIVSYVIAISVGGFAATIL.

This sequence belongs to the ferric reductase (FRE) family. Requires FAD as cofactor. Expressed in shoots. Detected in roots, pedicels, flowers, siliques and leaf veins.

It is found in the mitochondrion membrane. It catalyses the reaction 2 a Fe(II)-siderophore + NAD(+) + H(+) = 2 a Fe(III)-siderophore + NADH. Ferric chelate reductase probably involved in iron reduction in leaf veins for transport. May participate in the transport of electrons to a Fe(3+) ion via FAD and heme intermediates. The polypeptide is Ferric reduction oxidase 8, mitochondrial (FRO8) (Arabidopsis thaliana (Mouse-ear cress)).